The chain runs to 412 residues: Major facilitator superfamily domain-containing protein 3 (412 aa).

The next 12 membrane-spanning stretches (helical) occupy residues 10–30, 40–60, 73–93, 94–114, 138–158, 166–186, 209–229, 250–270, 291–311, 321–341, 361–381, and 384–404; these read GLYL…PVLL, VGLA…APLV, STAG…PGAG, QAGL…GAAM, VQVV…LALL, LFLL…AAPA, VLAV…KLGE, LGLW…SLGG, LGGL…GASM, ALLS…VTFT, LLAT…GGLA, and LGPH…VLYL.

It belongs to the major facilitator superfamily.

It is found in the membrane. This chain is Major facilitator superfamily domain-containing protein 3 (MFSD3), found in Homo sapiens (Human).